Consider the following 1596-residue polypeptide: MESRETLSSSRQRGGESDFLPVSSAKPPAAPGCAGEPLLSTPGPGKGIPVGGERMEPEEEDELGSGRDVDSNSNADSEKWVAGDGLEEQEFSIKEANFTEGSLKLKIQTTKRAKKPPKNLENYICPPEIKITIKQSGDQKVSRAGKNSKATKEEERSHSKKKLLTASDLAASDLKGFQPQAYERPQKHSTLHYDTGLPQDFTGDTLKPKHQQKSSSQNHMDWSTNSDSGPVTQNCFISPESGRETASTSKIPALEPVASFAKAQGKKGSAGNTWSQLSNNNKDLLLGGVAPSPSSHSSPAPPSSSAECNGLQPLVDQDGGGTKEPPEPPTVGSKKKSSKKDVISQTIPNPDLDWVKNAQKAFDNTEGKREGYSADSAQEASPARQNVSSASNPENDSSHVRITIPIKAPSLDPTNHKRKKRQSIKAVVEKIMPEKALASGITMSSEVVNRILSNSEGNKKDPRVPKLSKMIENESPSVGLETGGNAEKVIPGGVSKPRKPPMVMTPPTCTDHSPSRKLPEIQHPKFAAKRRWTCSKPKPSTMLREAVMATSDKLMLEPPSAYPITPSSPLYTNTDSLTVITPVKKKRGRPKKQPLLTVETIHEGTSTSPVSPISREFPGTKKRKRRRNLAKLAQLVPGEDKPMSEMKFHKKVGKLGVLDKKTIKTINKMKTLKRKNILNQILSCSSSVALKAKAPPETSPGAAAIESKLGKQINVSKRGTIYIGKKRGRKPRAELPPPSEEPKTAIKHPRPVSSQPDVPAVPSNFQSLVASSPAAMHPLSTQLGGSNGNLSPASTETNFSELKTMPNLQPISALPTKTQKGIHSGTWKLSPPRLMANSPSHLCEIGSLKEITLSPVSESHSEETIPSDSGIGTDNNSTSDQAEKSSESRRRYSFDFCSLDNPEAIPSDTSTKNRHGHRQKHLIVDNFLAHESLKKPKHKRKRKSLQNRDDLQFLADLEELITKFQVFRISHRSYTFYHENPYPSIFRINFDHYYPVPYIQYDPLLYLRRTSDLKSKKKRGRPAKTNDTMTKVPFLQGFSYPIPSGSYYAPYGMPYTSMPMMNLGYYGQYPAPLYLSHTLGAASPFMRPTVPPPQFHTNSHVKMSGAAKHKAKHGVHLQGPVSMGLGDMQPSLNPPKVGSASLSSGRLHKRKHKHKHKHKEDRILGTHDNLSGLFAGKATGFSSHILSERLSSADKELPLVSEKNKHKEKQKHQHSEAGHKASKNNFEVDTLSTLSLSDAQHWTQAKEKGDLSSEPVDSCTKRYSGSGGDGGSTRSENLDVFSEMNPSNDKWDSDVSGSKRRSYEGFGTYREKDIQAFKMNRKERSSYDSSMSPGMPSPHLKVDQTAVHSKNEGSVPTMMTRKKPAAVDSVTIPPAPVLSLLAASAATSDAVGSSLKKRFKRREIEAIQCEVRKMCNYTKILSTKKNLDHVNKILKAKRLQRQSKTGNNFVKKRRGRPRKQPTQFDEDSRDQMPVLEKCIDLPSKRGQKPSLSPLVLEPAASQDTIMATIEAVIHMAREAPPLPPPPPPPLPPPPPPPLPPPPPLPKTPRGGKRKHKPQAPAQPPQQSPPQQPLPQEEEVKAKRQRKSRGSESEVLP.

Polar residues predominate over residues 1-12 (MESRETLSSSRQ). 3 disordered regions span residues 1–83 (MESR…WVAG), 134–426 (KQSG…SIKA), and 475–518 (SPSV…SRKL). Residues 64-81 (GSGRDVDSNSNADSEKWV) are compositionally biased toward basic and acidic residues. Positions 164-175 (LTASDLAASDLK) are enriched in low complexity. Composition is skewed to polar residues over residues 213–236 (KSSSQNHMDWSTNSDSGPVTQNCF) and 270–282 (AGNTWSQLSNNNK). Residues 290–306 (APSPSSHSSPAPPSSSA) are compositionally biased toward low complexity. A compositionally biased stretch (basic and acidic residues) spans 363-372 (DNTEGKREGY). Over residues 375-395 (DSAQEASPARQNVSSASNPEN) the composition is skewed to polar residues. The segment at residues 584-596 (KKKRGRPKKQPLL) is a DNA-binding region (a.T hook 1). 3 disordered regions span residues 604-624 (GTSTSPVSPISREFPGTKKRK), 722-763 (YIGK…AVPS), and 777-796 (HPLSTQLGGSNGNLSPASTE). Polar residues predominate over residues 779-796 (LSTQLGGSNGNLSPASTE). An N6-acetyllysine modification is found at K817. Residues 854–880 (SPVSESHSEETIPSDSGIGTDNNSTSD) are compositionally biased toward polar residues. The interval 854–889 (SPVSESHSEETIPSDSGIGTDNNSTSDQAEKSSESR) is disordered. Positions 1016-1028 (KKKRGRPAKTNDT) form a DNA-binding region, a.T hook 2. 6 disordered regions span residues 1134–1164 (PPKVGSASLSSGRLHKRKHKHKHKHKEDRIL), 1202–1225 (EKNKHKEKQKHQHSEAGHKASKNN), 1245–1300 (AKEK…GSKR), 1325–1344 (SSYDSSMSPGMPSPHLKVDQ), 1440–1473 (QRQSKTGNNFVKKRRGRPRKQPTQFDEDSRDQMP), and 1518–1596 (EAPP…EVLP). The span at 1146–1159 (RLHKRKHKHKHKHK) shows a compositional bias: basic residues. Residues 1450-1459 (VKKRRGRPRK) are compositionally biased toward basic residues. A DNA-binding region (a.T hook 3) is located at residues 1451-1463 (KKRRGRPRKQPTQ). Tandem repeats lie at residues 1520 to 1527 (PPLPPPPP), 1528 to 1535 (PPLPPPPP), and 1536 to 1543 (PPLPPPPP). The interval 1520–1543 (PPLPPPPPPPLPPPPPPPLPPPPP) is 3 X 8 AA tandem repeats of P-P-L-P-P-P-P-P. Pro residues-rich tracts occupy residues 1520 to 1546 (PPLPPPPPPPLPPPPPPPLPPPPPLPK) and 1560 to 1572 (PAQPPQQSPPQQP).

Interacts with SET. As to expression, expressed in numerous tissues. Expressed at low levels in myeloid and monocytic cells as well as in CD34+ cells; expression levels are higher in myeloid malignancies.

It is found in the nucleus. The chain is SET-binding protein (SETBP1) from Homo sapiens (Human).